Here is a 418-residue protein sequence, read N- to C-terminus: UDP-N-acetylglucosamine 1-carboxyvinyltransferase (418 aa).

Residue 22 to 23 participates in phosphoenolpyruvate binding; sequence KN. Residue Arg-92 coordinates UDP-N-acetyl-alpha-D-glucosamine. The Proton donor role is filled by Cys-116. At Cys-116 the chain carries 2-(S-cysteinyl)pyruvic acid O-phosphothioketal. UDP-N-acetyl-alpha-D-glucosamine is bound by residues Asp-305 and Val-327.

It belongs to the EPSP synthase family. MurA subfamily.

The protein resides in the cytoplasm. It catalyses the reaction phosphoenolpyruvate + UDP-N-acetyl-alpha-D-glucosamine = UDP-N-acetyl-3-O-(1-carboxyvinyl)-alpha-D-glucosamine + phosphate. It participates in cell wall biogenesis; peptidoglycan biosynthesis. Cell wall formation. Adds enolpyruvyl to UDP-N-acetylglucosamine. This chain is UDP-N-acetylglucosamine 1-carboxyvinyltransferase, found in Endomicrobium trichonymphae.